The chain runs to 181 residues: ATP synthase subunit delta (181 aa).

Belongs to the ATPase delta chain family. F-type ATPases have 2 components, F(1) - the catalytic core - and F(0) - the membrane proton channel. F(1) has five subunits: alpha(3), beta(3), gamma(1), delta(1), epsilon(1). F(0) has three main subunits: a(1), b(2) and c(10-14). The alpha and beta chains form an alternating ring which encloses part of the gamma chain. F(1) is attached to F(0) by a central stalk formed by the gamma and epsilon chains, while a peripheral stalk is formed by the delta and b chains.

Its subcellular location is the cell inner membrane. In terms of biological role, f(1)F(0) ATP synthase produces ATP from ADP in the presence of a proton or sodium gradient. F-type ATPases consist of two structural domains, F(1) containing the extramembraneous catalytic core and F(0) containing the membrane proton channel, linked together by a central stalk and a peripheral stalk. During catalysis, ATP synthesis in the catalytic domain of F(1) is coupled via a rotary mechanism of the central stalk subunits to proton translocation. Its function is as follows. This protein is part of the stalk that links CF(0) to CF(1). It either transmits conformational changes from CF(0) to CF(1) or is implicated in proton conduction. The protein is ATP synthase subunit delta of Aquifex aeolicus (strain VF5).